The sequence spans 582 residues: Membrane protein insertase YidC (582 aa).

The helical transmembrane segment at 3–23 threads the bilayer; that stretch reads IQRALVITGIAVVSYLMIQAW. The tract at residues 38 to 92 is disordered; sequence QVAEQGNSSSSDSADLPSVQSQTDNSIPSAQSDNDLPSVSPADIAQPTPSSQRIE. Low complexity predominate over residues 45–58; it reads SSSSDSADLPSVQS. A compositionally biased stretch (polar residues) spans 59-74; it reads QTDNSIPSAQSDNDLP. Transmembrane regions (helical) follow at residues 357-377, 394-414, 464-484, 495-515, and 541-561; these read TVDY…LVFL, GVGN…AIFF, LGGC…YYVL, FFLW…PILM, and MPMI…LYWL.

This sequence belongs to the OXA1/ALB3/YidC family. Type 1 subfamily. In terms of assembly, interacts with the Sec translocase complex via SecD. Specifically interacts with transmembrane segments of nascent integral membrane proteins during membrane integration.

It is found in the cell inner membrane. Functionally, required for the insertion and/or proper folding and/or complex formation of integral membrane proteins into the membrane. Involved in integration of membrane proteins that insert both dependently and independently of the Sec translocase complex, as well as at least some lipoproteins. Aids folding of multispanning membrane proteins. The chain is Membrane protein insertase YidC from Alcanivorax borkumensis (strain ATCC 700651 / DSM 11573 / NCIMB 13689 / SK2).